Reading from the N-terminus, the 93-residue chain is Pyrimidine/purine nucleoside phosphorylase (93 aa).

It belongs to the nucleoside phosphorylase PpnP family.

It carries out the reaction a purine D-ribonucleoside + phosphate = a purine nucleobase + alpha-D-ribose 1-phosphate. The enzyme catalyses adenosine + phosphate = alpha-D-ribose 1-phosphate + adenine. It catalyses the reaction cytidine + phosphate = cytosine + alpha-D-ribose 1-phosphate. The catalysed reaction is guanosine + phosphate = alpha-D-ribose 1-phosphate + guanine. It carries out the reaction inosine + phosphate = alpha-D-ribose 1-phosphate + hypoxanthine. The enzyme catalyses thymidine + phosphate = 2-deoxy-alpha-D-ribose 1-phosphate + thymine. It catalyses the reaction uridine + phosphate = alpha-D-ribose 1-phosphate + uracil. The catalysed reaction is xanthosine + phosphate = alpha-D-ribose 1-phosphate + xanthine. In terms of biological role, catalyzes the phosphorolysis of diverse nucleosides, yielding D-ribose 1-phosphate and the respective free bases. Can use uridine, adenosine, guanosine, cytidine, thymidine, inosine and xanthosine as substrates. Also catalyzes the reverse reactions. This is Pyrimidine/purine nucleoside phosphorylase from Aliivibrio salmonicida (strain LFI1238) (Vibrio salmonicida (strain LFI1238)).